The following is a 1202-amino-acid chain: Adenine-specific methyltransferase PglX (1202 aa).

The protein belongs to the methyltransferase superfamily. PglX adenine methyltransferase family.

It catalyses the reaction a 2'-deoxyadenosine in DNA + S-adenosyl-L-methionine = an N(6)-methyl-2'-deoxyadenosine in DNA + S-adenosyl-L-homocysteine + H(+). In terms of biological role, BREX systems (bacteriophage exclusion) provide immunity against bacteriophage. Part of a type 1 BREX system which protects against dsDNA phage. This system allows phage adsorption but prevents phage DNA replication, without degradation of the phage DNA. Methylation of bacterial DNA by this protein guides self/non-self discrimination. Its function is as follows. Probably methylates the adenine in the fifth position of the hexamer 5'-ACRCAG-3' in genomic DNA. N(6)-methylated adenine on the fifth position of 5'-ACRCAG-3' is found in the genome; there are 1906 sites in the genomic DNA. The sequence is that of Adenine-specific methyltransferase PglX from Lacticaseibacillus casei (strain Zhang) (Lactobacillus casei).